Reading from the N-terminus, the 270-residue chain is SAGA-associated factor 29 homolog A (270 aa).

Ser-2 is modified (N-acetylserine). The segment at 85–113 is disordered; sequence LPSGPTGQQRRKLEGNEQKRKRMKVDTDV. Residues 95 to 113 show a composition bias toward basic and acidic residues; the sequence is RKLEGNEQKRKRMKVDTDV. The SGF29 C-terminal domain maps to 125–270; the sequence is EAYASLKGEQ…VVALPEGHRQ (146 aa). Histone H3K4me3 N-terminus binding regions lie at residues 168–170 and 217–220; these read DEE and GTTA. The tract at residues 242-245 is histone H3K4me3 binding; sequence FDDD.

This sequence belongs to the SGF29 family. Expressed in roots, rosette leaves, cauline leaves, stems and flowers.

It is found in the nucleus. Chromatin reader component of the transcription regulatory histone acetylation (HAT) complex SAGA. Involved in salt stress tolerance. Enhances the effect of ADA2B in the positive regulation of salt-induced gene expression. The chain is SAGA-associated factor 29 homolog A from Arabidopsis thaliana (Mouse-ear cress).